We begin with the raw amino-acid sequence, 405 residues long: Imidazolonepropionase (405 aa).

2 residues coordinate Fe(3+): His-73 and His-75. Residues His-73 and His-75 each contribute to the Zn(2+) site. Arg-82, Tyr-145, and His-178 together coordinate 4-imidazolone-5-propanoate. Tyr-145 lines the N-formimidoyl-L-glutamate pocket. His-243 contacts Fe(3+). His-243 contributes to the Zn(2+) binding site. A 4-imidazolone-5-propanoate-binding site is contributed by Gln-246. Asp-318 serves as a coordination point for Fe(3+). Asp-318 lines the Zn(2+) pocket. The N-formimidoyl-L-glutamate site is built by Asn-320 and Gly-322. Thr-323 is a binding site for 4-imidazolone-5-propanoate.

The protein belongs to the metallo-dependent hydrolases superfamily. HutI family. Requires Zn(2+) as cofactor. Fe(3+) serves as cofactor.

Its subcellular location is the cytoplasm. The catalysed reaction is 4-imidazolone-5-propanoate + H2O = N-formimidoyl-L-glutamate. The protein operates within amino-acid degradation; L-histidine degradation into L-glutamate; N-formimidoyl-L-glutamate from L-histidine: step 3/3. In terms of biological role, catalyzes the hydrolytic cleavage of the carbon-nitrogen bond in imidazolone-5-propanoate to yield N-formimidoyl-L-glutamate. It is the third step in the universal histidine degradation pathway. The chain is Imidazolonepropionase from Brucella suis (strain ATCC 23445 / NCTC 10510).